The chain runs to 99 residues: ADAPTAFNQCKACHSIEAGKNGVGPSLSGAYGRKVGLAPNYKYSAAHLASGMTIDEAMLTNYLANPKATIPGNKMGASFGGLKKPEDVKAVIEYLKTVK.

Residues cysteine 10, cysteine 13, histidine 14, and methionine 75 each contribute to the heme c site.

It belongs to the cytochrome c family. Binds 1 heme c group covalently per subunit.

In terms of biological role, cytochrome c2 is found mainly in purple, non-sulfur, photosynthetic bacteria where it functions as the electron donor to the oxidized bacteriochlorophyll in the photophosphorylation pathway. However, it may also have a role in the respiratory chain and is found in some non-photosynthetic bacteria. The sequence is that of Cytochrome c2 iso-1 from Magnetospirillum fulvum (Rhodospirillum fulvum).